The primary structure comprises 1095 residues: Tyrosine-sulfated glycopeptide receptor 1 (1095 aa).

The chain crosses the membrane as a helical span at residues Pro-23–Val-43. N-linked (GlcNAc...) asparagine glycans are attached at residues Asn-62 and Asn-73. LRR repeat units follow at residues Glu-91–Leu-115, Gln-116–Ala-139, Asp-141–Asn-165, Ile-170–Gln-195, Ala-197–Ala-221, Pro-223–Cys-246, Ser-247–Leu-270, Pro-271–Leu-294, Thr-295–Leu-318, Lys-320–Cys-342, Lys-344–Arg-366, Phe-367–Cys-391, Met-393–Leu-415, Glu-416–Gln-439, Cys-441–Arg-466, Phe-470–Leu-494, Gln-495–Thr-517, Leu-518–Leu-542, and Asn-566–Lys-589. Asn-165 carries an N-linked (GlcNAc...) asparagine glycan. N-linked (GlcNAc...) asparagine glycans are attached at residues Asn-199, Asn-204, and Asn-207. A glycan (N-linked (GlcNAc...) asparagine) is linked at Asn-258. An N-linked (GlcNAc...) asparagine glycan is attached at Asn-341. Asn-377 carries N-linked (GlcNAc...) asparagine glycosylation. N-linked (GlcNAc...) asparagine glycosylation is present at Asn-430. 7 N-linked (GlcNAc...) asparagine glycosylation sites follow: Asn-569, Asn-592, Asn-616, Asn-627, Asn-640, Asn-662, and Asn-714. LRR repeat units follow at residues Leu-604–Leu-628, Thr-629–Leu-652, and Phe-654–Thr-677. Residues Leu-721–Leu-741 traverse the membrane as a helical segment. A phosphothreonine mark is found at Thr-792 and Thr-800. One can recognise a Protein kinase domain in the interval Phe-803–Leu-1074. ATP is bound by residues Ile-809–Val-817 and Lys-831. Residues Tyr-876 and Tyr-916 each carry the phosphotyrosine modification. Asp-929 acts as the Proton acceptor in catalysis. Tyr-971 is subject to Phosphotyrosine.

It belongs to the protein kinase superfamily. Ser/Thr protein kinase family. Homo- and heterodimers with PSKR1. Interacts (via C-terminus) with AHA1 and AHA2 (via the R-domain). Post-translationally, autophosphorylated. Expressed ubiquitously, including in the shoot apical meristem and in the elongation zone of the root meristem.

It localises to the cell membrane. It catalyses the reaction L-seryl-[protein] + ATP = O-phospho-L-seryl-[protein] + ADP + H(+). The catalysed reaction is L-threonyl-[protein] + ATP = O-phospho-L-threonyl-[protein] + ADP + H(+). Tyrosine-sulfated glycopeptide receptor with a serine/threonine-protein kinase activity. Regulates, in response to tyrosine-sulfated glycopeptide binding, a signaling cascade involved in cellular proliferation and plant growth. Not involved in PSK perception. Involved in plant immunity, with antagonistic effects on bacterial and fungal resistances. Mediates activation of the plasma membrane H(+)-ATPase by PSY1. Phosphorylates AHA2 at Thr-881. The polypeptide is Tyrosine-sulfated glycopeptide receptor 1 (Arabidopsis thaliana (Mouse-ear cress)).